Here is a 497-residue protein sequence, read N- to C-terminus: L-amino-acid oxidase BjussuLAAO-I (497 aa).

The N-terminal stretch at 1-13 is a signal peptide; that stretch reads MNVFFMFSKPGKL. C23 and C186 are oxidised to a cystine. Residues 56–57, 76–77, 76–80, Q84, and 100–103 each bind FAD; these read MS, EA, EASER, and GPMR. Residue R103 participates in substrate binding. N185 carries an N-linked (GlcNAc...) asparagine glycan. Position 236 (H236) interacts with substrate. V274 lines the FAD pocket. A disulfide bond links C344 and C425. Y385 lines the substrate pocket. FAD contacts are provided by residues E470, 477-482, and 478-482; these read GWIAST and WIAST. Residue 477 to 478 coordinates substrate; sequence GW.

The protein belongs to the flavin monoamine oxidase family. FIG1 subfamily. Homodimer; non-covalently linked. FAD is required as a cofactor. Expressed by the venom gland.

It is found in the secreted. The enzyme catalyses an L-alpha-amino acid + O2 + H2O = a 2-oxocarboxylate + H2O2 + NH4(+). It carries out the reaction L-leucine + O2 + H2O = 4-methyl-2-oxopentanoate + H2O2 + NH4(+). The catalysed reaction is L-phenylalanine + O2 + H2O = 3-phenylpyruvate + H2O2 + NH4(+). It catalyses the reaction L-tryptophan + O2 + H2O = indole-3-pyruvate + H2O2 + NH4(+). The enzyme catalyses L-methionine + O2 + H2O = 4-methylsulfanyl-2-oxobutanoate + H2O2 + NH4(+). It carries out the reaction L-isoleucine + O2 + H2O = (S)-3-methyl-2-oxopentanoate + H2O2 + NH4(+). The catalysed reaction is L-tyrosine + O2 + H2O = 3-(4-hydroxyphenyl)pyruvate + H2O2 + NH4(+). It catalyses the reaction L-cysteine + O2 + H2O = 2-oxo-3-sulfanylpropanoate + H2O2 + NH4(+). Catalyzes an oxidative deamination of predominantly hydrophobic and aromatic L-amino acids, thus producing hydrogen peroxide that may contribute to the diverse toxic effects of this enzyme. Shows high specificity for L-Met, L-Leu, L-Phe, L-Tyr, L-Ile, L-Trp, a moderate activity on L-Cys and low activity on L-Val, L-Lys, L-Arg, L-His, L-Gln, L-Thr and L-Ser. Exhibits diverse biological activities, such as hemorrhage, hemolysis, edema, apoptosis of vascular endothelial cells or tumor cell lines, and antibacterial, as well as regulation of platelet aggregation. Effects of snake L-amino oxidases on platelets are controversial, since they either induce aggregation or inhibit agonist-induced aggregation. These different effects are probably due to different experimental conditions. In vitro, shows parasiticidal activities against both trypanosomes and leishmania, as a result of enzyme-catalyzed hydrogen peroxide production. The polypeptide is L-amino-acid oxidase BjussuLAAO-I (Bothrops jararacussu (Jararacussu)).